The chain runs to 121 residues: Small ribosomal subunit protein uS13 (121 aa).

A disordered region spans residues His-91–Lys-121.

This sequence belongs to the universal ribosomal protein uS13 family. In terms of assembly, part of the 30S ribosomal subunit. Forms a loose heterodimer with protein S19. Forms two bridges to the 50S subunit in the 70S ribosome.

Functionally, located at the top of the head of the 30S subunit, it contacts several helices of the 16S rRNA. In the 70S ribosome it contacts the 23S rRNA (bridge B1a) and protein L5 of the 50S subunit (bridge B1b), connecting the 2 subunits; these bridges are implicated in subunit movement. Contacts the tRNAs in the A and P-sites. This is Small ribosomal subunit protein uS13 from Treponema denticola (strain ATCC 35405 / DSM 14222 / CIP 103919 / JCM 8153 / KCTC 15104).